A 189-amino-acid polypeptide reads, in one-letter code: Dirigent protein 21 (189 aa).

The N-terminal stretch at 1–19 is a signal peptide; it reads MASLYLLLLLPLFLALILA. 2 N-linked (GlcNAc...) asparagine glycosylation sites follow: Asn-72 and Asn-173.

It belongs to the plant dirigent protein family. In terms of assembly, homodimer.

It is found in the secreted. Its function is as follows. Dirigent proteins impart stereoselectivity on the phenoxy radical-coupling reaction, yielding optically active lignans from two molecules of coniferyl alcohol in the biosynthesis of lignans, flavonolignans, and alkaloids and thus plays a central role in plant secondary metabolism. This chain is Dirigent protein 21 (DIR21), found in Arabidopsis thaliana (Mouse-ear cress).